Reading from the N-terminus, the 302-residue chain is RING-H2 finger protein ATL38 (302 aa).

Residues Leu-15–Phe-35 traverse the membrane as a helical segment. The segment at Cys-96 to Arg-138 adopts an RING-type; atypical zinc-finger fold. Residues Gly-279–Val-302 form a disordered region. The span at Lys-286–Val-302 shows a compositional bias: basic and acidic residues.

The protein belongs to the RING-type zinc finger family. ATL subfamily.

It is found in the membrane. The catalysed reaction is S-ubiquitinyl-[E2 ubiquitin-conjugating enzyme]-L-cysteine + [acceptor protein]-L-lysine = [E2 ubiquitin-conjugating enzyme]-L-cysteine + N(6)-ubiquitinyl-[acceptor protein]-L-lysine.. It functions in the pathway protein modification; protein ubiquitination. The protein is RING-H2 finger protein ATL38 (ATL38) of Arabidopsis thaliana (Mouse-ear cress).